Here is a 473-residue protein sequence, read N- to C-terminus: ATP synthase subunit beta (473 aa).

158 to 165 lines the ATP pocket; sequence GGAGVGKT.

This sequence belongs to the ATPase alpha/beta chains family. F-type ATPases have 2 components, CF(1) - the catalytic core - and CF(0) - the membrane proton channel. CF(1) has five subunits: alpha(3), beta(3), gamma(1), delta(1), epsilon(1). CF(0) has three main subunits: a(1), b(2) and c(9-12). The alpha and beta chains form an alternating ring which encloses part of the gamma chain. CF(1) is attached to CF(0) by a central stalk formed by the gamma and epsilon chains, while a peripheral stalk is formed by the delta and b chains.

The protein resides in the cell membrane. The enzyme catalyses ATP + H2O + 4 H(+)(in) = ADP + phosphate + 5 H(+)(out). Functionally, produces ATP from ADP in the presence of a proton gradient across the membrane. The catalytic sites are hosted primarily by the beta subunits. This chain is ATP synthase subunit beta, found in Anoxybacillus flavithermus (strain DSM 21510 / WK1).